Reading from the N-terminus, the 378-residue chain is Heterogeneous nuclear ribonucleoprotein A3 (378 aa).

M1 carries the post-translational modification N-acetylmethionine. Residues 1-10 (MEVKPPPGRP) show a composition bias toward pro residues. Positions 1 to 34 (MEVKPPPGRPQPDSGRRRRRRGEEGHDPKEPEQL) are disordered. K4 is covalently cross-linked (Glycyl lysine isopeptide (Lys-Gly) (interchain with G-Cter in SUMO2)). A Phosphoserine modification is found at S14. The segment covering 21–34 (RGEEGHDPKEPEQL) has biased composition (basic and acidic residues). The region spanning 35-118 (RKLFIGGLSF…RAVSREDSVK (84 aa)) is the RRM 1 domain. K36 is covalently cross-linked (Glycyl lysine isopeptide (Lys-Gly) (interchain with G-Cter in SUMO2)). Position 43 is a phosphoserine (S43). The residue at position 52 (R52) is a Dimethylated arginine; alternate. The residue at position 52 (R52) is an Omega-N-methylarginine; alternate. At R76 the chain carries Omega-N-methylarginine. S112 and S116 each carry phosphoserine. K118 participates in a covalent cross-link: Glycyl lysine isopeptide (Lys-Gly) (interchain with G-Cter in SUMO2). Position 124 is a phosphothreonine (T124). The RRM 2 domain occupies 126–205 (KKIFVGGIKE…CEVKKALSKQ (80 aa)). K134 bears the N6-acetyllysine; alternate mark. Residue K134 forms a Glycyl lysine isopeptide (Lys-Gly) (interchain with G-Cter in SUMO2); alternate linkage. Glycyl lysine isopeptide (Lys-Gly) (interchain with G-Cter in SUMO2) cross-links involve residues K151 and K182. The disordered stretch occupies residues 204–225 (KQEMQSAGSQRGRGGGSGNFMG). R214, R216, R226, R239, and R246 each carry omega-N-methylarginine; alternate. Residues R214, R216, R226, R239, and R246 each carry the asymmetric dimethylarginine; alternate modification. Positions 214–225 (RGRGGGSGNFMG) are enriched in gly residues. Residue R257 is modified to Omega-N-methylarginine. Asymmetric dimethylarginine is present on R286. A disordered region spans residues 336–378 (SGQQQSNYGPMKGGSFGGRSSGSPYGGGYGSGGGSGGYGSRRF). Positions 346-378 (MKGGSFGGRSSGSPYGGGYGSGGGSGGYGSRRF) are enriched in gly residues. S350 bears the Phosphoserine mark. R354 carries the post-translational modification Omega-N-methylarginine. S358 carries the post-translational modification Phosphoserine. A phosphotyrosine mark is found at Y360 and Y364. A phosphoserine mark is found at S366 and S370. Residue Y373 is modified to Phosphotyrosine. S375 is subject to Phosphoserine.

As to quaternary structure, identified in the spliceosome C complex.

Its subcellular location is the nucleus. Plays a role in cytoplasmic trafficking of RNA. Binds to the cis-acting response element, A2RE. May be involved in pre-mRNA splicing. The chain is Heterogeneous nuclear ribonucleoprotein A3 (HNRNPA3) from Homo sapiens (Human).